The chain runs to 733 residues: Polyribonucleotide nucleotidyltransferase (733 aa).

2 residues coordinate Mg(2+): D489 and D495. In terms of domain architecture, KH spans 556 to 615; it reads PKIDTIKIDVDKIKIVIGKGGETIDKIIAETGVKIDIDEEGNVSIYSSDQDAINRAKEII. The S1 motif domain occupies 625–693; sequence DEVYHAKVVR…AKGRVDASMK (69 aa). The tract at residues 691–733 is disordered; it reads SMKVLLPRPPKSDKPKHHHDKGHHPHKEYKGHKDHQESPKTEE. Residues 704–723 show a composition bias toward basic residues; sequence KPKHHHDKGHHPHKEYKGHK. The segment covering 724–733 has biased composition (basic and acidic residues); it reads DHQESPKTEE.

Belongs to the polyribonucleotide nucleotidyltransferase family. The cofactor is Mg(2+).

It localises to the cytoplasm. The catalysed reaction is RNA(n+1) + phosphate = RNA(n) + a ribonucleoside 5'-diphosphate. Its function is as follows. Involved in mRNA degradation. Catalyzes the phosphorolysis of single-stranded polyribonucleotides processively in the 3'- to 5'-direction. The polypeptide is Polyribonucleotide nucleotidyltransferase (Streptococcus sanguinis (strain SK36)).